The sequence spans 365 residues: Annexin B22 (365 aa).

Annexin repeat units follow at residues F34 to V105, D106 to Q185, E211 to R283, and D287 to G358. Residues M47, G49, G51, T52, E54, D91, M119, G121, G123, D126, K169, E171, T172, E177, D273, M300, G302, L303, G304, and D344 each contribute to the Ca(2+) site.

The protein belongs to the annexin family. Homodimer.

It localises to the tegument. The protein localises to the secreted. The protein resides in the extracellular exosome. It is found in the host cell. Involved in reproduction of the worm. Involved in host-parasite interaction. Delivered into the host cell by means of parasite exosomes. Binds to acidic phospholipid membranes in a calcium-dependent manner in vitro. Causes aggregation of liposomes in the presence of calcium, but not in its absence. Likely to promote membrane fusion. May provide structural integrity within the tegument. The polypeptide is Annexin B22 (Schistosoma mansoni (Blood fluke)).